The chain runs to 186 residues: Transposon Tn21 resolvase (186 aa).

The Resolvase/invertase-type recombinase catalytic domain maps to 4–137 (QRIGYIRVST…EGIALAKQRG (134 aa)). The O-(5'-phospho-DNA)-serine intermediate role is filled by Ser12. Residues 164–183 (KTKLAREFGISRETLYQYLR) constitute a DNA-binding region (H-T-H motif).

The protein belongs to the site-specific recombinase resolvase family.

Resolvase catalyzes the resolution (a site-specific recombination) of the cointegrated replicon to yield the final transposition products. This Escherichia coli protein is Transposon Tn21 resolvase (tnpR).